The chain runs to 621 residues: SH2B adapter protein 2 (621 aa).

At tyrosine 47 the chain carries Phosphotyrosine. Serine 130 carries the phosphoserine modification. The disordered stretch occupies residues 143-166 (RRSSPEPDGGATPKAAEPASEPRD). The 114-residue stretch at 186–299 (DIQREGALRF…WVADIQGCVD (114 aa)) folds into the PH domain. A Phosphoserine modification is found at serine 303. Residues 409 to 507 (WFHGTLSRVK…SADITLRSYV (99 aa)) form the SH2 domain. Disordered stretches follow at residues 507 to 528 (VRAQGPPPDPGPAPNTAAPVPA) and 549 to 611 (PASP…LGRA). A compositionally biased stretch (low complexity) spans 552 to 571 (PSNGAGASSSSGSSSSATSL). Serine 597 carries the post-translational modification Phosphoserine. Position 618 is a phosphotyrosine (tyrosine 618).

The protein belongs to the SH2B adapter family. Homodimer. Interacts with KIT/c-KIT, SHC1, EPOR, PDGFR, VAV1 and VAV3. Interacts (via N-terminal region) with SHC1. Interacts (via the phosphorylated C-terminus) with GRB2. Interacts (via its SH2 domain) with EPOR, INSR and KIT. Interacts with GRB2 after B-cell antigen receptor stimulation. Interacts (via PH domain) with VAV3. Interacts with NTRK1, NTRK2 and NTRK3 (phosphorylated); after stimulation of the receptor by its extracellular ligand and subsequent autophosphorylation of the receptor. Binds INSR, GRB2, ASB6 and CAP. Insulin stimulation leads to dissociation of CAP. Binds CBS only when SH2B2/APS has become phosphorylated. INSR binding does not depend on the phosphorylation of SH2B2/APS. Tyrosine phosphorylated by JAK2, KIT and other kinases activated by B-cell receptor in response to stimulation with cytokines, IL3, IL5, PDGF, IGF1, IGF2, CSF2/GM-CSF and cross-linking of the B-cell receptor complex. In terms of tissue distribution, strongly expressed in brain; also expressed in spleen, kidney and skeletal muscle, and at low levels in small intestine and bone marrow. Strongly expressed in B-cell lines, but not T-cell lines. Also expressed in myeloid and fibroblast cell lines.

The protein localises to the cytoplasm. Its subcellular location is the cell membrane. Its function is as follows. Adapter protein for several members of the tyrosine kinase receptor family. Involved in multiple signaling pathways. May be involved in coupling from immunoreceptor to Ras signaling. Acts as a negative regulator of cytokine signaling in collaboration with CBL. Binds to EPOR and suppresses EPO-induced STAT5 activation, possibly through a masking effect on STAT5 docking sites in EPOR. Suppresses PDGF-induced mitogenesis. May induce cytoskeletal reorganization via interaction with VAV3. This chain is SH2B adapter protein 2 (Sh2b2), found in Mus musculus (Mouse).